A 128-amino-acid polypeptide reads, in one-letter code: Holo-[acyl-carrier-protein] synthase (128 aa).

Positions 9 and 56 each coordinate Mg(2+).

This sequence belongs to the P-Pant transferase superfamily. AcpS family. Mg(2+) serves as cofactor.

Its subcellular location is the cytoplasm. The catalysed reaction is apo-[ACP] + CoA = holo-[ACP] + adenosine 3',5'-bisphosphate + H(+). Transfers the 4'-phosphopantetheine moiety from coenzyme A to a Ser of acyl-carrier-protein. The protein is Holo-[acyl-carrier-protein] synthase of Pelagibacter ubique (strain HTCC1062).